A 262-amino-acid polypeptide reads, in one-letter code: Type II restriction enzyme HinfI (262 aa).

The enzyme catalyses Endonucleolytic cleavage of DNA to give specific double-stranded fragments with terminal 5'-phosphates.. Functionally, a P subtype restriction enzyme that recognizes the double-stranded sequence 5'-GANTC-3' and cleaves after G-1. The chain is Type II restriction enzyme HinfI (hinfIR) from Haemophilus influenzae.